Here is a 155-residue protein sequence, read N- to C-terminus: Endoribonuclease YbeY (155 aa).

Zn(2+)-binding residues include H114, H118, and H124.

The protein belongs to the endoribonuclease YbeY family. The cofactor is Zn(2+).

The protein localises to the cytoplasm. Single strand-specific metallo-endoribonuclease involved in late-stage 70S ribosome quality control and in maturation of the 3' terminus of the 16S rRNA. The polypeptide is Endoribonuclease YbeY (Buchnera aphidicola subsp. Acyrthosiphon pisum (strain APS) (Acyrthosiphon pisum symbiotic bacterium)).